A 337-amino-acid polypeptide reads, in one-letter code: Diacylglycerol acyltransferase/mycolyltransferase Ag85A (337 aa).

The N-terminal stretch at 1-42 is a signal peptide; that stretch reads MKLVDRFRGAATGTSRRLMVGAVGAALLSGLVGFVGGSATAS. Residue 85-86 coordinates substrate; that stretch reads MR. Positions 101–111 are fibronectin-binding; sequence FEWYYQSGISV. A disulfide bridge connects residues C130 and C135. S169 and D197 together coordinate substrate. S169 acts as the Nucleophile in catalysis. E273 is an active-site residue. Residues 275–278, K282, and 305–307 each bind substrate; these read FVRT and HSW. H305 is a catalytic residue.

The protein belongs to the mycobacterial A85 antigen family. As to quaternary structure, homodimer.

It is found in the secreted. The protein localises to the cell wall. It localises to the cytoplasm. It catalyses the reaction an acyl-CoA + a 1,2-diacyl-sn-glycerol = a triacyl-sn-glycerol + CoA. It carries out the reaction 2 alpha,alpha'-trehalose 6-mycolate = alpha,alpha'-trehalose 6,6'-bismycolate + alpha,alpha-trehalose. Its function is as follows. The antigen 85 proteins (FbpA, FbpB, FbpC) are responsible for the high affinity of mycobacteria for fibronectin, a large adhesive glycoprotein, which facilitates the attachment of M.tuberculosis to murine alveolar macrophages (AMs). They also help to maintain the integrity of the cell wall by catalyzing the transfer of mycolic acids to cell wall arabinogalactan, and through the synthesis of alpha,alpha-trehalose dimycolate (TDM, cord factor). They catalyze the transfer of a mycoloyl residue from one molecule of alpha,alpha-trehalose monomycolate (TMM) to another TMM, leading to the formation of TDM. FbpA mediates triacylglycerol (TAG) formation with long-chain acyl-CoA as the acyl donor and 1,2-dipalmitoyl-sn-glycerol (1,2-dipalmitin) as the acyl acceptor. It has a preference for C26:0-CoA over C18:1-CoA. The chain is Diacylglycerol acyltransferase/mycolyltransferase Ag85A (fbpA) from Mycobacterium ulcerans.